Consider the following 857-residue polypeptide: RNA-directed RNA polymerase 2a (857 aa).

In terms of domain architecture, RdRp catalytic spans 511–624 (KHCLEIDLSK…FSLLPPVGDP (114 aa)). Over residues 780 to 789 (IERRCNDKRR) the composition is skewed to basic and acidic residues. Residues 780–827 (IERRCNDKRRTPTGSYGGGEEAETKVSQTESTGTRSQKSQRESAFKSQ) are disordered. Residues 804-816 (KVSQTESTGTRSQ) are compositionally biased toward polar residues.

It belongs to the ssRNA positive-strand viruses RNA-directed RNA polymerase family. In terms of assembly, interacts with replication protein 1a.

It catalyses the reaction RNA(n) + a ribonucleoside 5'-triphosphate = RNA(n+1) + diphosphate. RNA-dependent RNA polymerase which replicates the viral genome composed of 3 RNA segments, RNA1, RNA2 and RNA3. The polypeptide is RNA-directed RNA polymerase 2a (Cucumber mosaic virus (strain FNY) (CMV)).